The sequence spans 440 residues: Trigger factor (440 aa).

The PPIase FKBP-type domain occupies Lys-160–Pro-253.

It belongs to the FKBP-type PPIase family. Tig subfamily.

It is found in the cytoplasm. The catalysed reaction is [protein]-peptidylproline (omega=180) = [protein]-peptidylproline (omega=0). Functionally, involved in protein export. Acts as a chaperone by maintaining the newly synthesized protein in an open conformation. Functions as a peptidyl-prolyl cis-trans isomerase. The protein is Trigger factor of Chlorobium chlorochromatii (strain CaD3).